Reading from the N-terminus, the 636-residue chain is Leucine-rich repeat and fibronectin type-III domain-containing protein 4 (636 aa).

A signal peptide spans 1–16 (MAPPLLLLLLASGAAA). The LRRNT domain maps to 17 to 48 (CPLPCVCQNLSESLSTLCAHRGLLFVPPNVDR). Residues 17–518 (CPLPCVCQNL…LQAHVLGGTL (502 aa)) are Extracellular-facing. A glycan (N-linked (GlcNAc...) asparagine) is linked at asparagine 25. LRR repeat units lie at residues 49–70 (RTVE…DFRN), 73–94 (GLVD…SFGD), 97–118 (SLRS…SLRG), 121–142 (NLQH…AFDD), 146–169 (SLED…GSMP), 170–191 (ALHT…VFAQ), and 194–215 (QLSR…PLFS). The region spanning 234 to 280 (NPLHCNCELLWLRRLARPDDLETCASPPTLAGRYFWAVPEGEFSCEP) is the LRRCT domain. Residues 281 to 367 (PLIARHTQRL…GEATARVELR (87 aa)) form the Ig-like domain. Cysteines 302 and 351 form a disulfide. Residue asparagine 333 is glycosylated (N-linked (GlcNAc...) asparagine). A Fibronectin type-III domain is found at 405-502 (SEPAVQVTEV…GCAHFSTLPA (98 aa)). The helical transmembrane segment at 519 to 539 (TVAVGGVLVAALLVFTVALLV) threads the bilayer. Over 540–636 (RGRGAGNGRL…SAERLEESVV (97 aa)) the chain is Cytoplasmic. The disordered stretch occupies residues 556–585 (VQSQTNGGTSPMPKSHPPRSPPPRPQRSCS). Over residues 569 to 580 (KSHPPRSPPPRP) the composition is skewed to pro residues. Phosphoserine is present on residues serine 585 and serine 627. Positions 633-636 (ESVV) match the PDZ-binding motif.

It belongs to the LRFN family. Forms heteromeric complexes with LRFN1 and LRFN2. Can form heteromeric complexes with LRFN3 and LRFN5. Unable to form homophilic interactions across cell junctions. Interacts with DLG1, DLG2, DLG3 and DLG4. Post-translationally, glycosylated.

It is found in the membrane. Promotes neurite outgrowth in hippocampal neurons. May play a role in redistributing DLG4 to the cell periphery. The chain is Leucine-rich repeat and fibronectin type-III domain-containing protein 4 (Lrfn4) from Rattus norvegicus (Rat).